A 349-amino-acid polypeptide reads, in one-letter code: Phenylalanine--tRNA ligase alpha subunit (349 aa).

E259 provides a ligand contact to Mg(2+).

It belongs to the class-II aminoacyl-tRNA synthetase family. Phe-tRNA synthetase alpha subunit type 1 subfamily. Tetramer of two alpha and two beta subunits. Mg(2+) is required as a cofactor.

The protein localises to the cytoplasm. The enzyme catalyses tRNA(Phe) + L-phenylalanine + ATP = L-phenylalanyl-tRNA(Phe) + AMP + diphosphate + H(+). This is Phenylalanine--tRNA ligase alpha subunit from Lactobacillus delbrueckii subsp. bulgaricus (strain ATCC 11842 / DSM 20081 / BCRC 10696 / JCM 1002 / NBRC 13953 / NCIMB 11778 / NCTC 12712 / WDCM 00102 / Lb 14).